Consider the following 101-residue polypeptide: Gamma-secretase subunit PEN-2 (101 aa).

Residues 1-17 (MNLERVSNEEKLNLCRK) are Cytoplasmic-facing. The segment at residues 18–36 (YYLGGFAFLPFLWLVNIFW) is an intramembrane region (helical). Residues 37 to 57 (FFREAFLVPAYTEQSQIKGYV) are Cytoplasmic-facing. A helical membrane pass occupies residues 58–78 (WRSAVGFLFWVIVLTSWITIF). Over 79–101 (QIYRPRWGALGDYLSFTIPLGTP) the chain is Lumenal.

Belongs to the PEN-2 family. In terms of assembly, the functional gamma-secretase complex is composed of at least four polypeptides: a presenilin homodimer (PSEN1 or PSEN2), nicastrin (NCSTN), APH1 (APH1A or APH1B) and PSENEN. As to expression, widely expressed. Expressed in leukocytes, lung, placenta, small intestine, liver, kidney, spleen thymus, skeletal muscle, heart and brain.

The protein resides in the endoplasmic reticulum membrane. It is found in the golgi apparatus. The protein localises to the golgi stack membrane. It localises to the cell membrane. Its subcellular location is the membrane. Essential subunit of the gamma-secretase complex, an endoprotease complex that catalyzes the intramembrane cleavage of integral membrane proteins such as Notch receptors and APP (amyloid-beta precursor protein). The gamma-secretase complex plays a role in Notch and Wnt signaling cascades and regulation of downstream processes via its role in processing key regulatory proteins, and by regulating cytosolic CTNNB1 levels. PSENEN modulates both endoproteolysis of presenilin and gamma-secretase activity. The chain is Gamma-secretase subunit PEN-2 (PSENEN) from Homo sapiens (Human).